The chain runs to 66 residues: Small ribosomal subunit protein bS21 (66 aa).

Belongs to the bacterial ribosomal protein bS21 family.

This chain is Small ribosomal subunit protein bS21, found in Persephonella marina (strain DSM 14350 / EX-H1).